A 206-amino-acid polypeptide reads, in one-letter code: Small ribosomal subunit protein uS4 (206 aa).

Positions 15–46 are disordered; the sequence is MGENIWGRPKSPVNKREYGPGQHGQRRKNKLS. Residues 94-157 enclose the S4 RNA-binding domain; the sequence is RRLDAIVYRA…RQLAIVLEAT (64 aa).

It belongs to the universal ribosomal protein uS4 family. As to quaternary structure, part of the 30S ribosomal subunit. Contacts protein S5. The interaction surface between S4 and S5 is involved in control of translational fidelity.

Its function is as follows. One of the primary rRNA binding proteins, it binds directly to 16S rRNA where it nucleates assembly of the body of the 30S subunit. In terms of biological role, with S5 and S12 plays an important role in translational accuracy. In Cereibacter sphaeroides (strain ATCC 17025 / ATH 2.4.3) (Rhodobacter sphaeroides), this protein is Small ribosomal subunit protein uS4.